Here is a 127-residue protein sequence, read N- to C-terminus: Oleate-induced peroxisomal protein POX18 (127 aa).

Residues 14–119 (FKELHEGLAD…KATAIESVFK (106 aa)) form the SCP2 domain. The interval 33-41 (AVNAVIVIT) is hydrophobic. The tract at residues 43–52 (KNKEGKEQSW) is hydrophilic.

Monomer.

The protein localises to the peroxisome. It functions in the pathway lipid metabolism; fatty acid metabolism. Functionally, is involved in beta-oxidation of long-chain fatty acids. Its exact function is unknown, but possesses a nonspecific lipid-transfer activity, despite the absence of a cysteine residue thought to be essential for the activity of its mammalian counterparts. In Candida maltosa (Yeast), this protein is Oleate-induced peroxisomal protein POX18 (POX18).